We begin with the raw amino-acid sequence, 619 residues long: Chaperone protein HscA homolog (619 aa).

It belongs to the heat shock protein 70 family.

In terms of biological role, chaperone involved in the maturation of iron-sulfur cluster-containing proteins. Has a low intrinsic ATPase activity which is markedly stimulated by HscB. This Haemophilus influenzae (strain PittEE) protein is Chaperone protein HscA homolog.